Consider the following 761-residue polypeptide: Complement factor B (761 aa).

The first 22 residues, 1–22 (MESPQLCLVLLVLGFSSGGVSA), serve as a signal peptide directing secretion. 3 consecutive Sushi domains span residues 32–97 (VSCS…ECRA), 98–157 (IRCP…ICDD), and 160–217 (GYCP…SCQD). Cystine bridges form between C34–C73, C59–C95, C100–C142, C128–C155, C162–C202, and C188–C215. 2 N-linked (GlcNAc...) asparagine glycosylation sites follow: N119 and N139. The region spanning 267–466 (NIYLVLDGSD…DLENVFYQMI (200 aa)) is the VWFA domain. Mg(2+) contacts are provided by S275 and S277. N-linked (GlcNAc...) asparagine glycosylation is present at N282. T350 is a Mg(2+) binding site. N-linked (GlcNAc...) asparagine glycosylation occurs at N375. Residues 474-754 (LCGMVWEHKK…VLPWLKDKLK (281 aa)) form the Peptidase S1 domain. Intrachain disulfides connect C475-C593, C508-C524, C596-C612, C653-C679, and C692-C722. Catalysis depends on charge relay system residues H523 and D573. S696 acts as the Charge relay system in catalysis.

Belongs to the peptidase S1 family. In terms of assembly, monomer. Interacts with complement C3b; this interaction is dependent on the presence of Mg(2+). As to quaternary structure, catalytic component of the C3 convertase of the alternative complement pathway, also named C3bBb, composed of complement factor B Bb and complement C3b. Catalytic component of the C5 convertase of the alternative complement pathway, also named C3bBb3b, composed of complement factor B Bb and additional molecules of complement C3b. Interacts to CFP; this interaction contributes to the stabilization of the active C3-convertase enzyme complex. It depends on Mg(2+) as a cofactor. Mn(2+) serves as cofactor. Cleaved by CFD following activation of the alternative complement system, generating Ba and Bb chains. Cleavage and activation takes place when CFB is already associated with complement C3b.

The protein resides in the secreted. The protein localises to the cell surface. The catalysed reaction is Cleavage of Arg-|-Ser bond in complement component C3 alpha-chain to yield C3a and C3b, and Arg-|-Xaa bond in complement component C5 alpha-chain to yield C5a and C5b.. In terms of biological role, precursor of the catalytic component of the C3 and C5 convertase complexes of the alternative pathway of the complement system, a cascade of proteins that leads to phagocytosis and breakdown of pathogens and signaling that strengthens the adaptive immune system. The alternative complement pathway acts as an amplification loop that enhances other complement pathways (classical, lectin and GZMK) by promoting formation of additional C3 and C5 convertases. CFB is cleaved and activated by CFD to generate Ba and Bb chains; Bb chain constituting the catalytic component of the C3 and C5 convertases. Serine protease component of the complement C3 and C5 convertase complexes of the alternative complement pathway. Following cleavage and activation by factor D (CFD), forms the C3 convertase together with complement C3b. As part of the C3 convertase, cleaves and activates C3 into C3a anaphylatoxin and C3b opsonin, the next components of the complement pathways. When an additional complement C3b molecule binds to the C3 convertase, forms the C5 convertase, which cleaves and activates C5 into C5a anaphylatoxin and C5b component of the membrane attack complex. Functionally, involved in proliferation and differentiation of preactivated B-lymphocytes, rapid spreading of peripheral blood monocytes, stimulation of lymphocyte blastogenesis and lysis of erythrocytes. The chain is Complement factor B (Cfb) from Mus musculus (Mouse).